The primary structure comprises 1364 residues: ABC-type transporter cns4 (1364 aa).

An ABC transporter 1 domain is found at 42–290; the sequence is SRVKESRAKP…MEEMGFLYTD (249 aa). Residues Asn152 and Asn214 are each glycosylated (N-linked (GlcNAc...) asparagine). Helical transmembrane passes span 435 to 455, 483 to 503, 508 to 528, 540 to 560, and 567 to 587; these read LFFA…GSFA, IPLI…MTGL, EAFL…TALF, AAIK…GFLI, and PWLG…AVLS. N-linked (GlcNAc...) asparagine glycosylation occurs at Asn610. The chain crosses the membrane as a helical span at residues 650–670; the sequence is FAIVWVWWALFVILTVYFTSN. N-linked (GlcNAc...) asparagine glycans are attached at residues Asn689, Asn711, and Asn739. The interval 697-732 is disordered; the sequence is DEEVGSGPDSHDSRNRSGISPIGDKQETSTDGPSKI. In terms of domain architecture, ABC transporter 2 spans 737–985; that stretch reads IRNTSVFTWK…TVNEYFGRNG (249 aa). ATP is bound at residue 779-786; that stretch reads GSSGAGKT. A run of 6 helical transmembrane segments spans residues 1076–1094, 1105–1125, 1146–1166, 1185–1205, 1211–1231, and 1245–1265; these read LMLH…WKIG, FTIF…QPLF, AFAT…AVVY, AVFF…QAIA, AIFA…FCGV, and WLYY…FTTF.

The protein belongs to the ABC transporter superfamily. ABCG family. PDR (TC 3.A.1.205) subfamily.

The protein resides in the cell membrane. In terms of biological role, ABC-type transporter; part of the gene cluster that mediates the biosynthesis of cordycepin (COR) and pentostatin (PTN), two adenosine analogs with related bioactivity profiles as both mimic adenosine and can inhibit some of the processes that are adenosine dependent. Mediates the pumping of pentostatin but not of cordycepin out of fungal cells. Decreasing intracellular pentostatin releases adenosine deaminase (ADA) inhibition, allowing ADA to deaminate cordycepin into non-toxic 3'-d. The sequence is that of ABC-type transporter cns4 from Cordyceps militaris (strain CM01) (Caterpillar fungus).